We begin with the raw amino-acid sequence, 149 residues long: Transcriptional repressor NrdR (149 aa).

A zinc finger spans residues 3–34; the sequence is CPYCSYEESKVVDSRSAEDYNAIRRRRECLRC. The ATP-cone domain occupies 49–139; sequence ILVIKKDLSR…VYRQFKDINT (91 aa).

It belongs to the NrdR family. It depends on Zn(2+) as a cofactor.

Functionally, negatively regulates transcription of bacterial ribonucleotide reductase nrd genes and operons by binding to NrdR-boxes. The sequence is that of Transcriptional repressor NrdR from Clostridium perfringens (strain SM101 / Type A).